Consider the following 82-residue polypeptide: Large ribosomal subunit protein uL23 (82 aa).

This sequence belongs to the universal ribosomal protein uL23 family. In terms of assembly, part of the 50S ribosomal subunit. Contacts protein L29.

Its function is as follows. Binds to 23S rRNA. One of the proteins that surrounds the polypeptide exit tunnel on the outside of the ribosome. In Methanococcoides burtonii (strain DSM 6242 / NBRC 107633 / OCM 468 / ACE-M), this protein is Large ribosomal subunit protein uL23.